Consider the following 678-residue polypeptide: MGKIHELSSVLADQIAAGEVVERPASVVKELVENAVDAHATQVDILVQESGVQSIRVIDDGDGIDDAEVLTAFKRHATSKITSREDLFRVHSLGFRGEALPSIASVADVVMNTSTGATGTSIHYRGGKLLQQSPAPLRQGTDITVTDLFFNTPARLKYLKSPQTELANILDVVNRIALSYPAVAFRLVHNAKELLKTAGRGDLQQVIAGIYGVQNARKMVAIQGSTTDFKLSGFVALPELTRASRQYITVLINGRAIKNQQLTKAVIKGYGSKLMVGRYPIAVIALTMDPLLVDVNVHPTKQEVRLSKEPELAKLVSTTITDRLVDVNLIPSALTNLGSHRREHLNTDQLAMDLNAVSSQYQVADKTTPASTEQFAASLAAATMQPSSATTMVSTTSAQPSAVNRAAVSAVVPSESAASSANQPIMISHRDELTATPVQAFDQRYQSESGALPFGETAEPLETSTAASAPTSEAPDTERFPQLRYLGQMHGTYLLAEADDGMYILDQHAAQERINYEYYRQAIGEVSADQQNLLVPIILDYPTSDVLKIKEKLPLLAELGIHLESFGGNSFIVHAHPTWFKAGQEEDTIREMIDWLLQDDKLTVAQFREKSAIMMSCKRAIKANHHLDDQQARALLAKLPTCENPFNCPHGRPVTVHFTNSDMERMFKRIQDSHEARD.

This sequence belongs to the DNA mismatch repair MutL/HexB family.

Functionally, this protein is involved in the repair of mismatches in DNA. It is required for dam-dependent methyl-directed DNA mismatch repair. May act as a 'molecular matchmaker', a protein that promotes the formation of a stable complex between two or more DNA-binding proteins in an ATP-dependent manner without itself being part of a final effector complex. The polypeptide is DNA mismatch repair protein MutL (Lactiplantibacillus plantarum (strain ATCC BAA-793 / NCIMB 8826 / WCFS1) (Lactobacillus plantarum)).